Here is a 487-residue protein sequence, read N- to C-terminus: UDP-N-acetylmuramoyl-L-alanyl-D-glutamate--2,6-diaminopimelate ligase (487 aa).

UDP-N-acetyl-alpha-D-muramoyl-L-alanyl-D-glutamate contacts are provided by Leu23 and Ser25. 108–114 (GTNGKTS) is an ATP binding site. Residues 150-151 (TT), Ser177, Gln183, and Arg185 contribute to the UDP-N-acetyl-alpha-D-muramoyl-L-alanyl-D-glutamate site. The residue at position 217 (Lys217) is an N6-carboxylysine. Residues Arg378, 402 to 405 (DNPR), Gly453, and Glu457 contribute to the meso-2,6-diaminopimelate site. A Meso-diaminopimelate recognition motif motif is present at residues 402–405 (DNPR).

Belongs to the MurCDEF family. MurE subfamily. Requires Mg(2+) as cofactor. In terms of processing, carboxylation is probably crucial for Mg(2+) binding and, consequently, for the gamma-phosphate positioning of ATP.

It is found in the cytoplasm. The catalysed reaction is UDP-N-acetyl-alpha-D-muramoyl-L-alanyl-D-glutamate + meso-2,6-diaminopimelate + ATP = UDP-N-acetyl-alpha-D-muramoyl-L-alanyl-gamma-D-glutamyl-meso-2,6-diaminopimelate + ADP + phosphate + H(+). It functions in the pathway cell wall biogenesis; peptidoglycan biosynthesis. Its function is as follows. Catalyzes the addition of meso-diaminopimelic acid to the nucleotide precursor UDP-N-acetylmuramoyl-L-alanyl-D-glutamate (UMAG) in the biosynthesis of bacterial cell-wall peptidoglycan. The chain is UDP-N-acetylmuramoyl-L-alanyl-D-glutamate--2,6-diaminopimelate ligase from Pseudomonas aeruginosa (strain ATCC 15692 / DSM 22644 / CIP 104116 / JCM 14847 / LMG 12228 / 1C / PRS 101 / PAO1).